The following is a 399-amino-acid chain: Dual specificity mitogen-activated protein kinase kinase 4 (399 aa).

Positions 1–40 are disordered; that stretch reads MAAPSPSGGGGSGGGSGSGTPGPVGSPAPGHPAVSSMQGK. Alanine 2 carries the N-acetylalanine modification. A compositionally biased stretch (gly residues) spans 7–22; the sequence is SGGGGSGGGSGSGTPG. The segment at 37–52 is d domain; it reads MQGKRKALKLNFANPP. The residue at position 58 (arginine 58) is an Asymmetric dimethylarginine; alternate. Position 58 is an omega-N-methylarginine; alternate (arginine 58). Serine 90 is modified (phosphoserine). In terms of domain architecture, Protein kinase spans 102–367; sequence LKDLGEIGRG…YKELLKHPFI (266 aa). ATP-binding positions include 108-116 and lysine 131; that span reads IGRGAYGSV. The active-site Proton acceptor is aspartate 229. Serine 257 carries the post-translational modification Phosphoserine; by MAP3K. Residue threonine 261 is modified to Phosphothreonine; by MAP3K. Residues 364–387 form a DVD domain region; the sequence is HPFILMYEERAVEVACYVCKILDQ.

Belongs to the protein kinase superfamily. STE Ser/Thr protein kinase family. MAP kinase kinase subfamily. As to quaternary structure, interacts with SPAG9. Interacts (via its D domain) with its substrates MAPK8/JNK1, MAPK9/JNK2, MAPK10/JNK3, MAPK11 and MAPK14. Interacts (via its DVD domain) with MAP3Ks activators like MAP3K1/MEKK1 and MAP3K11/MLK3. Interacts with ARRB1, ARRB2 and MAPK8IP3/JIP3. Post-translationally, activated by phosphorylation on Ser-257 and Thr-261 by MAP kinase kinase kinases (MAP3Ks). In terms of tissue distribution, abundant expression is seen in the skeletal muscle. It is also widely expressed in other tissues.

The protein resides in the cytoplasm. Its subcellular location is the nucleus. It carries out the reaction L-seryl-[protein] + ATP = O-phospho-L-seryl-[protein] + ADP + H(+). The enzyme catalyses L-threonyl-[protein] + ATP = O-phospho-L-threonyl-[protein] + ADP + H(+). It catalyses the reaction L-tyrosyl-[protein] + ATP = O-phospho-L-tyrosyl-[protein] + ADP + H(+). Its activity is regulated as follows. Activated in response to a variety of cellular stresses, including UV and gamma-irradiation, heat shock, hyperosmolarity, T-cell receptor stimulation, peroxide and inflammatory cytokines. Also activated by developmental cues. MAP2K4/MKK4 is activated by the majority of MKKKs, such as MAP3K5/ASK1, MAP3K1/MEKK1, MAP3K7/TAK1, MAP3K10/MLK2, MAP3K11/MLK3, MAP3K12/DLK and MAP3K13/LZK. Its function is as follows. Dual specificity protein kinase which acts as an essential component of the MAP kinase signal transduction pathway. Essential component of the stress-activated protein kinase/c-Jun N-terminal kinase (SAP/JNK) signaling pathway. With MAP2K7/MKK7, is the one of the only known kinase to directly activate the stress-activated protein kinase/c-Jun N-terminal kinases MAPK8/JNK1, MAPK9/JNK2 and MAPK10/JNK3. MAP2K4/MKK4 and MAP2K7/MKK7 both activate the JNKs by phosphorylation, but they differ in their preference for the phosphorylation site in the Thr-Pro-Tyr motif. MAP2K4 shows preference for phosphorylation of the Tyr residue and MAP2K7/MKK7 for the Thr residue. The phosphorylation of the Thr residue by MAP2K7/MKK7 seems to be the prerequisite for JNK activation at least in response to pro-inflammatory cytokines, while other stimuli activate both MAP2K4/MKK4 and MAP2K7/MKK7 which synergistically phosphorylate JNKs. MAP2K4 is required for maintaining peripheral lymphoid homeostasis. The MKK/JNK signaling pathway is also involved in mitochondrial death signaling pathway, including the release cytochrome c, leading to apoptosis. Whereas MAP2K7/MKK7 exclusively activates JNKs, MAP2K4/MKK4 additionally activates the p38 MAPKs MAPK11, MAPK12, MAPK13 and MAPK14. This Homo sapiens (Human) protein is Dual specificity mitogen-activated protein kinase kinase 4 (MAP2K4).